Here is a 627-residue protein sequence, read N- to C-terminus: WPP domain-interacting tail-anchored protein 2 (627 aa).

Coiled-coil stretches lie at residues cysteine 81–leucine 152, leucine 188–tyrosine 218, and threonine 312–arginine 542. The disordered stretch occupies residues serine 577–serine 597. Residues glutamate 580–serine 597 show a composition bias toward basic and acidic residues. The chain crosses the membrane as a helical span at residues leucine 606 to threonine 626.

In terms of assembly, component of Ran complexes at least composed of WIT1 or WIT2, RANGAP1 or RANGAP2, and WIP1 or WIP2 or WIP3. Interacts with KAKU1. Core component of the LINC complex which is composed of inner nuclear membrane SUN domain-containing proteins coupled to outer nuclear membrane WIP and WIT proteins. The LINC complex also involves nucleoskeletal proteins CRWN/LINC and possibly KAKU4 and the cytoskeletal myosin KAKU1. Interacts with WIP1, WIP2 and WIP3. As to expression, ubiquitous.

It localises to the membrane. In terms of biological role, together with WIT1, required for the nuclear envelope docking of RANGAP proteins in root tips. Plays a role in nuclear shape determination. As component of the SUN-WIP-WIT2-KAKU1 complex, mediates the transfer of cytoplasmic forces to the nuclear envelope (NE), leading to nuclear shape changes. The chain is WPP domain-interacting tail-anchored protein 2 (WIT2) from Arabidopsis thaliana (Mouse-ear cress).